The following is a 149-amino-acid chain: Nucleoside diphosphate kinase 1 (149 aa).

Residues lysine 10, phenylalanine 58, arginine 86, threonine 92, arginine 103, and asparagine 113 each contribute to the ATP site. Histidine 116 functions as the Pros-phosphohistidine intermediate in the catalytic mechanism.

The protein belongs to the NDK family. Requires Mg(2+) as cofactor.

The enzyme catalyses a 2'-deoxyribonucleoside 5'-diphosphate + ATP = a 2'-deoxyribonucleoside 5'-triphosphate + ADP. It carries out the reaction a ribonucleoside 5'-diphosphate + ATP = a ribonucleoside 5'-triphosphate + ADP. In terms of biological role, major role in the synthesis of nucleoside triphosphates other than ATP. The ATP gamma phosphate is transferred to the NDP beta phosphate via a ping-pong mechanism, using a phosphorylated active-site intermediate. This NDK is microtubule-associated. This chain is Nucleoside diphosphate kinase 1 (NDPK1), found in Pisum sativum (Garden pea).